Consider the following 159-residue polypeptide: uncharacterized protein (159 aa).

The segment at 1-139 (MSRRAPGSRL…RKSQERSMSY (139 aa)) is disordered. The span at 9 to 31 (RLSSGGTNYSRSWNDWQPRTDSA) shows a compositional bias: polar residues. Residues 65–82 (QRHDDTRVHADIQNDEKG) are compositionally biased toward basic and acidic residues. Polar residues predominate over residues 105–119 (RVNNVTSPEFTSVQH). Over residues 125–134 (ATKDMRKSQE) the composition is skewed to basic and acidic residues.

This is an uncharacterized protein from Homo sapiens (Human).